The following is a 185-amino-acid chain: Large ribosomal subunit protein uL5 (185 aa).

Belongs to the universal ribosomal protein uL5 family. As to quaternary structure, part of the 50S ribosomal subunit; part of the 5S rRNA/L5/L18/L25 subcomplex. Contacts the 5S rRNA and the P site tRNA. Forms a bridge to the 30S subunit in the 70S ribosome.

In terms of biological role, this is one of the proteins that bind and probably mediate the attachment of the 5S RNA into the large ribosomal subunit, where it forms part of the central protuberance. In the 70S ribosome it contacts protein S13 of the 30S subunit (bridge B1b), connecting the 2 subunits; this bridge is implicated in subunit movement. Contacts the P site tRNA; the 5S rRNA and some of its associated proteins might help stabilize positioning of ribosome-bound tRNAs. The sequence is that of Large ribosomal subunit protein uL5 from Phocaeicola vulgatus (strain ATCC 8482 / DSM 1447 / JCM 5826 / CCUG 4940 / NBRC 14291 / NCTC 11154) (Bacteroides vulgatus).